A 304-amino-acid polypeptide reads, in one-letter code: UDP-N-acetylenolpyruvoylglucosamine reductase (304 aa).

Residues 31 to 196 (KVGGPADYLA…ISAKFNLKPG (166 aa)) enclose the FAD-binding PCMH-type domain. Residue Arg175 is part of the active site. Ser225 (proton donor) is an active-site residue. Glu295 is a catalytic residue.

The protein belongs to the MurB family. Requires FAD as cofactor.

Its subcellular location is the cytoplasm. It carries out the reaction UDP-N-acetyl-alpha-D-muramate + NADP(+) = UDP-N-acetyl-3-O-(1-carboxyvinyl)-alpha-D-glucosamine + NADPH + H(+). Its pathway is cell wall biogenesis; peptidoglycan biosynthesis. Its function is as follows. Cell wall formation. The sequence is that of UDP-N-acetylenolpyruvoylglucosamine reductase from Streptococcus thermophilus (strain CNRZ 1066).